Here is a 345-residue protein sequence, read N- to C-terminus: MSKKKVMVGMSGGIDSSVTAYMLQNEGYEVEGIYLKLHNRTDGYHEKNLGYIEDVAKFLNIKYYILDLADKFSKEVYDYFVDSYLTGTTPNPCVKCNRQIKFGAMLDFAKQHGASYLATGHYAKTDGKFFYEADDKTKDQSYFLSQVDKDALKYMMFPLSTYKKEDIVKFGAKLDVAYKKITEKSESQEICFVETVYTDVVKKHANIDQEGDVLDENGKVVGKHKGFAHYTIGKRRGFTVKGAQEPHFVTKLNPKDNTIVVGKKEALEVNEVVGNNLNMFIDDTKFSCNVKLRYRSVSTPCEVQIKDEKAYITLKEPVYGVAKGQLAVFYHEEKVIGSAWIESTK.

Residues 9–16 and Leu35 contribute to the ATP site; that span reads GMSGGIDS. The Nucleophile role is filled by Cys96. The cysteines at positions 96 and 191 are disulfide-linked. An ATP-binding site is contributed by Gly120. The tract at residues 138-140 is interaction with tRNA; sequence KDQ. Cys191 serves as the catalytic Cysteine persulfide intermediate. An interaction with tRNA region spans residues 293 to 294; sequence RY.

Belongs to the MnmA/TRMU family.

Its subcellular location is the cytoplasm. It carries out the reaction S-sulfanyl-L-cysteinyl-[protein] + uridine(34) in tRNA + AH2 + ATP = 2-thiouridine(34) in tRNA + L-cysteinyl-[protein] + A + AMP + diphosphate + H(+). Catalyzes the 2-thiolation of uridine at the wobble position (U34) of tRNA, leading to the formation of s(2)U34. The chain is tRNA-specific 2-thiouridylase MnmA 1 from Aliarcobacter butzleri (strain RM4018) (Arcobacter butzleri).